Consider the following 516-residue polypeptide: Cytochrome P450 1A2 (516 aa).

An O-linked (GlcNAc) serine glycan is attached at serine 69. Residue phenylalanine 226 coordinates substrate. Position 458 (cysteine 458) interacts with heme.

This sequence belongs to the cytochrome P450 family. Interacts with PGRMC1; the interaction requires PGRMC1 homodimerization. The cofactor is heme.

The protein localises to the endoplasmic reticulum membrane. The protein resides in the microsome membrane. It catalyses the reaction an organic molecule + reduced [NADPH--hemoprotein reductase] + O2 = an alcohol + oxidized [NADPH--hemoprotein reductase] + H2O + H(+). The catalysed reaction is 17beta-estradiol + reduced [NADPH--hemoprotein reductase] + O2 = 2-hydroxy-17beta-estradiol + oxidized [NADPH--hemoprotein reductase] + H2O + H(+). It carries out the reaction 17beta-estradiol + reduced [NADPH--hemoprotein reductase] + O2 = 4-hydroxy-17beta-estradiol + oxidized [NADPH--hemoprotein reductase] + H2O + H(+). The enzyme catalyses estrone + reduced [NADPH--hemoprotein reductase] + O2 = 2-hydroxyestrone + oxidized [NADPH--hemoprotein reductase] + H2O + H(+). It catalyses the reaction estrone + reduced [NADPH--hemoprotein reductase] + O2 = 4-hydroxyestrone + oxidized [NADPH--hemoprotein reductase] + H2O + H(+). The catalysed reaction is cholesterol + reduced [NADPH--hemoprotein reductase] + O2 = 25-hydroxycholesterol + oxidized [NADPH--hemoprotein reductase] + H2O + H(+). It carries out the reaction all-trans-retinol + reduced [NADPH--hemoprotein reductase] + O2 = all-trans-retinal + oxidized [NADPH--hemoprotein reductase] + 2 H2O + H(+). The enzyme catalyses all-trans-retinal + reduced [NADPH--hemoprotein reductase] + O2 = all-trans-retinoate + oxidized [NADPH--hemoprotein reductase] + H2O + 2 H(+). It catalyses the reaction (5Z,8Z,11Z,14Z)-eicosatetraenoate + reduced [NADPH--hemoprotein reductase] + O2 = (14R,15S)-epoxy-(5Z,8Z,11Z)-eicosatrienoate + oxidized [NADPH--hemoprotein reductase] + H2O + H(+). The catalysed reaction is (5Z,8Z,11Z,14Z)-eicosatetraenoate + reduced [NADPH--hemoprotein reductase] + O2 = (14S,15R)-epoxy-(5Z,8Z,11Z)-eicosatrienoate + oxidized [NADPH--hemoprotein reductase] + H2O + H(+). It carries out the reaction (5Z,8Z,11Z,14Z,17Z)-eicosapentaenoate + reduced [NADPH--hemoprotein reductase] + O2 = (17R,18S)-epoxy-(5Z,8Z,11Z,14Z)-eicosatetraenoate + oxidized [NADPH--hemoprotein reductase] + H2O + H(+). The enzyme catalyses (4Z,7Z,10Z,13Z,16Z,19Z)-docosahexaenoate + reduced [NADPH--hemoprotein reductase] + O2 = (19R,20S)-epoxy-(4Z,7Z,10Z,13Z,16Z)-docosapentaenoate + oxidized [NADPH--hemoprotein reductase] + H2O + H(+). It catalyses the reaction (5S)-hydroperoxy-(6E,8Z,11Z,14Z)-eicosatetraenoate = 5-oxo-(6E,8Z,11Z,14Z)-eicosatetraenoate + H2O. The catalysed reaction is (12S)-hydroperoxy-(5Z,8Z,10E,14Z)-eicosatetraenoate = 12-oxo-(5Z,8Z,10E,14Z)-eicosatetraenoate + H2O. It carries out the reaction (15S)-hydroperoxy-(5Z,8Z,11Z,13E)-eicosatetraenoate = 15-oxo-(5Z,8Z,11Z,13E)-eicosatetraenoate + H2O. The enzyme catalyses (13S)-hydroperoxy-(9Z,11E)-octadecadienoate = 13-oxo-(9Z,11E)-octadecadienoate + H2O. It catalyses the reaction (5Z,8Z,11Z,14Z)-eicosatetraenoate + reduced [NADPH--hemoprotein reductase] + O2 = 13-hydroxy-(5Z,8Z,11Z,14Z)-eicosatetraenoate + oxidized [NADPH--hemoprotein reductase] + H2O + H(+). The catalysed reaction is (5Z,8Z,11Z,14Z)-eicosatetraenoate + reduced [NADPH--hemoprotein reductase] + O2 = 19-hydroxy-(5Z,8Z,11Z,14Z)-eicosatetraenoate + oxidized [NADPH--hemoprotein reductase] + H2O + H(+). It carries out the reaction (9Z,12Z)-octadecadienoate + reduced [NADPH--hemoprotein reductase] + O2 = 11-hydroxy-(9Z,12Z)-octadecadienoate + oxidized [NADPH--hemoprotein reductase] + H2O + H(+). Its pathway is cofactor metabolism; retinol metabolism. It functions in the pathway steroid metabolism; cholesterol metabolism. It participates in lipid metabolism; arachidonate metabolism. A cytochrome P450 monooxygenase involved in the metabolism of various endogenous substrates, including fatty acids, steroid hormones and vitamins. Mechanistically, uses molecular oxygen inserting one oxygen atom into a substrate, and reducing the second into a water molecule, with two electrons provided by NADPH via cytochrome P450 reductase (NADPH--hemoprotein reductase). Catalyzes the hydroxylation of carbon-hydrogen bonds. Exhibits high catalytic activity for the formation of hydroxyestrogens from estrone (E1) and 17beta-estradiol (E2), namely 2-hydroxy E1 and E2. Metabolizes cholesterol toward 25-hydroxycholesterol, a physiological regulator of cellular cholesterol homeostasis. May act as a major enzyme for all-trans retinoic acid biosynthesis in the liver. Catalyzes two successive oxidative transformation of all-trans retinol to all-trans retinal and then to the active form all-trans retinoic acid. Primarily catalyzes stereoselective epoxidation of the last double bond of polyunsaturated fatty acids (PUFA), displaying a strong preference for the (R,S) stereoisomer. Catalyzes bisallylic hydroxylation and omega-1 hydroxylation of PUFA. May also participate in eicosanoids metabolism by converting hydroperoxide species into oxo metabolites (lipoxygenase-like reaction, NADPH-independent). Plays a role in the oxidative metabolism of xenobiotics. Catalyzes the N-hydroxylation of heterocyclic amines and the O-deethylation of phenacetin. Metabolizes caffeine via N3-demethylation. The chain is Cytochrome P450 1A2 (CYP1A2) from Macaca fuscata fuscata (Japanese macaque).